A 129-amino-acid chain; its full sequence is uncharacterized protein (129 aa).

In terms of domain architecture, VOC spans 6–129 (QVHHIAIIAT…DGLPLELYEQ (124 aa)). Positions 9, 57, 78, and 125 each coordinate a divalent metal cation.

It to B.subtilis YwkD.

This is an uncharacterized protein from Escherichia coli (strain K12).